The following is a 135-amino-acid chain: Small ribosomal subunit protein bS6 (135 aa).

The segment at histidine 96–arginine 135 is disordered. The span at glutamine 105 to arginine 135 shows a compositional bias: basic and acidic residues.

It belongs to the bacterial ribosomal protein bS6 family.

Its function is as follows. Binds together with bS18 to 16S ribosomal RNA. This Cereibacter sphaeroides (strain ATCC 17029 / ATH 2.4.9) (Rhodobacter sphaeroides) protein is Small ribosomal subunit protein bS6.